We begin with the raw amino-acid sequence, 210 residues long: Urease accessory protein UreF (210 aa).

This sequence belongs to the UreF family. In terms of assembly, ureD, UreF and UreG form a complex that acts as a GTP-hydrolysis-dependent molecular chaperone, activating the urease apoprotein by helping to assemble the nickel containing metallocenter of UreC. The UreE protein probably delivers the nickel.

The protein localises to the cytoplasm. Its function is as follows. Required for maturation of urease via the functional incorporation of the urease nickel metallocenter. The sequence is that of Urease accessory protein UreF from Cereibacter sphaeroides (strain ATCC 17029 / ATH 2.4.9) (Rhodobacter sphaeroides).